We begin with the raw amino-acid sequence, 244 residues long: Putative B3 domain-containing protein At2g31460 (244 aa).

A DNA-binding region (TF-B3) is located at residues 49-147 (SSMHMENSGF…PVHDGVNLSG (99 aa)). 2 disordered regions span residues 175–196 (DGNL…QDSV) and 217–244 (DSQG…GHYQ). Over residues 235 to 244 (GSIRDSGHYQ) the composition is skewed to basic and acidic residues.

The protein localises to the nucleus. The protein is Putative B3 domain-containing protein At2g31460 of Arabidopsis thaliana (Mouse-ear cress).